The sequence spans 209 residues: Small ribosomal subunit protein uS4 (209 aa).

In terms of domain architecture, S4 RNA-binding spans 99-160 (ARLDSVAYRM…RARASLRCKA (62 aa)).

Belongs to the universal ribosomal protein uS4 family. Part of the 30S ribosomal subunit. Contacts protein S5. The interaction surface between S4 and S5 is involved in control of translational fidelity.

Its function is as follows. One of the primary rRNA binding proteins, it binds directly to 16S rRNA where it nucleates assembly of the body of the 30S subunit. In terms of biological role, with S5 and S12 plays an important role in translational accuracy. The chain is Small ribosomal subunit protein uS4 from Dechloromonas aromatica (strain RCB).